We begin with the raw amino-acid sequence, 356 residues long: 3'-5' exonuclease (356 aa).

Positions 1 to 120 (MDKYLIKMPT…TPSPEKEKPE (120 aa)) are disordered. Basic and acidic residues-rich tracts occupy residues 29–56 (TIDK…ENTP) and 71–85 (KNQD…IKNE). The span at 99-113 (LTRSTRSMAEEGTPS) shows a compositional bias: low complexity. Phosphoserine occurs at positions 105 and 113. The 162-residue stretch at 155–316 (TTLDVVPMAF…GQVIYRDLEQ (162 aa)) folds into the 3'-5' exonuclease domain. Asp-165, Glu-167, and Asp-303 together coordinate Mg(2+).

The protein belongs to the WRNexo family.

Its subcellular location is the nucleus. Functionally, has exonuclease activity on both single-stranded and duplex templates bearing overhangs, but not blunt ended duplex DNA, and cleaves in a 3'-5' direction. Essential for the formation of DNA replication focal centers. Has an important role in maintaining genome stability. This is 3'-5' exonuclease from Drosophila willistoni (Fruit fly).